Reading from the N-terminus, the 443-residue chain is Aspartic protease PEP3 (443 aa).

Residues 1–36 (MQNRPRVFDSAMNLSPNMHFLSLMPGLLLLSLQVHT) form the signal peptide. Residues 37–107 (SPTPLKKTIR…NTVSKAMQAN (71 aa)) constitute a propeptide, activation peptide. Positions 123–440 (YLSPVTIGGQ…DLRGPSLHVA (318 aa)) constitute a Peptidase A1 domain. Asp-139 is an active-site residue. N-linked (GlcNAc...) asparagine glycosylation is found at Asn-180 and Asn-293. Asp-327 is an active-site residue. Cys-363 and Cys-403 are joined by a disulfide. Asn-364 and Asn-388 each carry an N-linked (GlcNAc...) asparagine glycan.

The protein belongs to the peptidase A1 family. Monomer.

It is found in the secreted. Its function is as follows. Secreted aspartic endopeptidase that allows assimilation of proteinaceous substrates. The scissile peptide bond is attacked by a nucleophilic water molecule activated by two aspartic residues in the active site. Shows a broad primary substrate specificity. Favors hydrophobic residues at the P1 and P1' positions. This chain is Aspartic protease PEP3, found in Coccidioides posadasii (strain C735) (Valley fever fungus).